We begin with the raw amino-acid sequence, 424 residues long: 3-isopropylmalate dehydratase large subunit 2 (424 aa).

The [4Fe-4S] cluster site is built by C299, C359, and C362.

It belongs to the aconitase/IPM isomerase family. LeuC type 2 subfamily. As to quaternary structure, heterodimer of LeuC and LeuD. The cofactor is [4Fe-4S] cluster.

The enzyme catalyses (2R,3S)-3-isopropylmalate = (2S)-2-isopropylmalate. It participates in amino-acid biosynthesis; L-leucine biosynthesis; L-leucine from 3-methyl-2-oxobutanoate: step 2/4. Catalyzes the isomerization between 2-isopropylmalate and 3-isopropylmalate, via the formation of 2-isopropylmaleate. This chain is 3-isopropylmalate dehydratase large subunit 2, found in Rubrobacter xylanophilus (strain DSM 9941 / JCM 11954 / NBRC 16129 / PRD-1).